Reading from the N-terminus, the 324-residue chain is 33 kDa ribonucleoprotein, chloroplastic (324 aa).

A chloroplast-targeting transit peptide spans 1–71 (MSGCCFSFAA…YRSSIFLSTC (71 aa)). RRM domains lie at 114-192 (GRLY…FPEV) and 217-296 (HKLY…AGQK). The disordered stretch occupies residues 294–324 (GQKAPVSSPPVVETSPENDSDNSELLSSLSS). A compositionally biased stretch (low complexity) spans 298–308 (PVSSPPVVETS).

Its subcellular location is the plastid. It localises to the chloroplast. Its function is as follows. Could be involved in splicing and/or processing of chloroplast RNA's. In Nicotiana sylvestris (Wood tobacco), this protein is 33 kDa ribonucleoprotein, chloroplastic.